The primary structure comprises 527 residues: Calcium and calcium/calmodulin-dependent serine/threonine-protein kinase (527 aa).

Positions 12–314 constitute a Protein kinase domain; that stretch reads YEVSEILGRG…AQELLSDPWV (303 aa). 18 to 26 is a binding site for ATP; it reads LGRGGFSVV. The segment at 25 to 51 is disordered; the sequence is VVRKGTRKSNNDDEKSQSQSKSQSQSQ. The span at 41 to 51 shows a compositional bias: low complexity; that stretch reads QSQSKSQSQSQ. An ATP-binding site is contributed by K55. Residues 59–78 are disordered; sequence RLGTSNNLPRKKDGGENSTE. D179 acts as the Proton acceptor in catalysis. Residues 239 to 255 form a helical membrane-spanning segment; that stretch reads MWSLGVILYILLSGYPP. The residue at position 279 (T279) is a Phosphothreonine. A calmodulin-binding region spans residues 337–350; sequence ARRKLRAAAIASVW. Residues 358-379 are a coiled coil; the sequence is TKKLKSLVGSYDLKEDEIENLR. 3 consecutive EF-hand domains span residues 408 to 443, 444 to 479, and 486 to 521; these read SLIP…LKNS, KGED…LPYD, and TEPG…DSSL. Residues D421, N423, D425, T427, E432, D457, D459, S461, C463, E468, D499, N501, D503, K505, and E510 each coordinate Ca(2+).

It belongs to the protein kinase superfamily. CAMK Ser/Thr protein kinase family. CaMK subfamily. Autophosphorylation.

The protein localises to the membrane. It catalyses the reaction L-seryl-[protein] + ATP = O-phospho-L-seryl-[protein] + ADP + H(+). The enzyme catalyses L-threonyl-[protein] + ATP = O-phospho-L-threonyl-[protein] + ADP + H(+). Activated by calcium. Autophosphorylation may play an important role in the regulation of the kinase activity. Functionally, protein kinase that recognizes the calcium spiking induced by Nod factors and translates this signal to components controlling nodulation and mycorrhizal infection responses. This is Calcium and calcium/calmodulin-dependent serine/threonine-protein kinase (SYM9) from Pisum sativum (Garden pea).